Reading from the N-terminus, the 257-residue chain is tRNA pseudouridine synthase A (257 aa).

Catalysis depends on Asp-43, which acts as the Nucleophile. Tyr-94 contributes to the substrate binding site.

Belongs to the tRNA pseudouridine synthase TruA family.

It carries out the reaction uridine(38/39/40) in tRNA = pseudouridine(38/39/40) in tRNA. Functionally, formation of pseudouridine at positions 38, 39 and 40 in the anticodon stem and loop of transfer RNAs. The chain is tRNA pseudouridine synthase A from Pyrobaculum arsenaticum (strain DSM 13514 / JCM 11321 / PZ6).